We begin with the raw amino-acid sequence, 277 residues long: MEIRYATNPRDFKNYDNERVREDFLINNLFEKGNINMVYSHYDRLIVGGAVPTNSPLHLEDKETLKTEYFLERREVGFFNISNNKGKITVDGEVYELDHRDCLYVGKENKNILIESIDSDNPARFYIVSATAHKNYPTQKKSLQEATHRHLGDDSQSNKRDLYQYIHADGIQSCQLMMGMTFLSENNMWNTMPPHIHDRRMEAYLYFDIDEDEKIMHFMGQPNDTRNIVVSNEQAVLSPPWSIHSGVGTKNYTFIWAMAGENYTFDDMDHVVKNQLK.

Residues histidine 195, histidine 197, glutamate 202, and histidine 244 each coordinate Zn(2+).

The protein belongs to the KduI family. Requires Zn(2+) as cofactor.

It catalyses the reaction 5-dehydro-4-deoxy-D-glucuronate = 3-deoxy-D-glycero-2,5-hexodiulosonate. The protein operates within glycan metabolism; pectin degradation; 2-dehydro-3-deoxy-D-gluconate from pectin: step 4/5. In terms of biological role, catalyzes the isomerization of 5-dehydro-4-deoxy-D-glucuronate to 3-deoxy-D-glycero-2,5-hexodiulosonate. In Oceanobacillus iheyensis (strain DSM 14371 / CIP 107618 / JCM 11309 / KCTC 3954 / HTE831), this protein is 4-deoxy-L-threo-5-hexosulose-uronate ketol-isomerase.